The chain runs to 239 residues: 6-phosphogluconolactonase (239 aa).

This sequence belongs to the glucosamine/galactosamine-6-phosphate isomerase family. 6-phosphogluconolactonase subfamily.

It carries out the reaction 6-phospho-D-glucono-1,5-lactone + H2O = 6-phospho-D-gluconate + H(+). The protein operates within carbohydrate degradation; pentose phosphate pathway; D-ribulose 5-phosphate from D-glucose 6-phosphate (oxidative stage): step 2/3. In terms of biological role, hydrolysis of 6-phosphogluconolactone to 6-phosphogluconate. In Xylella fastidiosa (strain 9a5c), this protein is 6-phosphogluconolactonase (pgl).